We begin with the raw amino-acid sequence, 445 residues long: MLTSFKSSSSSSEDATATTTENPPPLCIASSSAATSASHHLRRLLFTAANFVSQSNFTAAQNLLSILSLNSSPHGDSTERLVHLFTKALSVRINRQQQDQTAETVATWTTNEMTMSNSTVFTSSVCKEQFLFRTKNNNSDFESCYYLWLNQLTPFIRFGHLTANQAILDATETNDNGALHILDLDISQGLQWPPLMQALAERSSNPSSPPPSLRITGCGRDVTGLNRTGDRLTRFADSLGLQFQFHTLVIVEEDLAGLLLQIRLLALSAVQGETIAVNCVHFLHKIFNDDGDMIGHFLSAIKSLNSRIVTMAEREANHGDHSFLNRFSEAVDHYMAIFDSLEATLPPNSRERLTLEQRWFGKEILDVVAAEETERKQRHRRFEIWEEMMKRFGFVNVPIGSFALSQAKLLLRLHYPSEGYNLQFLNNSLFLGWQNRPLFSVSSWK.

Low complexity predominate over residues 1 to 21 (MLTSFKSSSSSSEDATATTTE). The segment at 1–26 (MLTSFKSSSSSSEDATATTTENPPPL) is disordered. The 414-residue stretch at 32–445 (SAATSASHHL…RPLFSVSSWK (414 aa)) folds into the GRAS domain. The interval 39–127 (HHLRRLLFTA…STVFTSSVCK (89 aa)) is leucine repeat I (LRI). The interval 146–217 (YLWLNQLTPF…SPPPSLRITG (72 aa)) is VHIID. The VHIID signature appears at 179-183 (LHILD). The tract at residues 227–259 (RTGDRLTRFADSLGLQFQFHTLVIVEEDLAGLL) is leucine repeat II (LRII). Residues 275–366 (IAVNCVHFLH…QRWFGKEILD (92 aa)) are PFYRE. The SAW stretch occupies residues 369 to 445 (AAEETERKQR…RPLFSVSSWK (77 aa)).

The protein belongs to the GRAS family. As to expression, expressed in roots and flowers.

Its subcellular location is the nucleus. In terms of biological role, probable transcription factor required for axillary (lateral) shoot meristem formation during vegetative development. Seems to act upstream of REVOLUTA. The chain is Scarecrow-like protein 18 (SCL18) from Arabidopsis thaliana (Mouse-ear cress).